The following is a 689-amino-acid chain: Glycine--tRNA ligase beta subunit (689 aa).

This sequence belongs to the class-II aminoacyl-tRNA synthetase family. Tetramer of two alpha and two beta subunits.

It is found in the cytoplasm. It catalyses the reaction tRNA(Gly) + glycine + ATP = glycyl-tRNA(Gly) + AMP + diphosphate. This is Glycine--tRNA ligase beta subunit from Serratia proteamaculans (strain 568).